Here is a 208-residue protein sequence, read N- to C-terminus: Large ribosomal subunit protein bL17 (208 aa).

Residues 122-208 (TEKKKKKPAK…ASEEAPPKTE (87 aa)) form a disordered region. Positions 151–179 (ADTPAPAAEESAPAKAAEPEAEAAAPEAE) are enriched in low complexity.

This sequence belongs to the bacterial ribosomal protein bL17 family. Part of the 50S ribosomal subunit. Contacts protein L32.

This Desulfosudis oleivorans (strain DSM 6200 / JCM 39069 / Hxd3) (Desulfococcus oleovorans) protein is Large ribosomal subunit protein bL17.